Reading from the N-terminus, the 272-residue chain is HTH-type transcriptional repressor AllR (272 aa).

A disordered region spans residues Met1–Gly20. Residues Ala21–Leu83 enclose the HTH iclR-type domain. The H-T-H motif DNA-binding region spans Val43–Lys62. The IclR-ED domain maps to Val98–Leu267. Residues Ser154–Ala156, Asp207, Cys217, and Ser234–Ser236 each bind glyoxylate.

Negative regulator of allantoin and glyoxylate utilization operons. Binds to the gcl promoter and to the allS-allA intergenic region. The chain is HTH-type transcriptional repressor AllR (allR) from Salmonella typhi.